A 731-amino-acid chain; its full sequence is MKTKTYRFVCLVASVLTLQLMNGSSAATPPPPPNSKNSSTSCNRTCGGISIPFPFGIGGKDCYLNGWYEVVCNATTSGSSGTTVPFLSRINREVVNISLPEGNNEQYGVVHIKGPVTSLGCSSNTSQVPQKSLPDLNVTGKGSPYFITDENRLVAVGCGTKALMTDIESEILGCESSCKDSKSSQEVTNLLCDGYKCCQARIPVERPQAVGVNIESSGGDGCKVAFLSSKRYSPSNVTIPEQFHAGGYVVVELGWYFATTDSRFRNPLGCINLTYSGSYLSGDSCLCEYGYFSEMSYRNCYCSLGFTGNPYLRGGCIDNDDCKGPNICEEGTCVNVPGGYRCDPKPKIIKPAKPLVLQGVLLGLMGLLFLVVGTLGLIIFIKKRRRIISSRKFFKRNGGLLLKQQLTTTNDGNVDMSRLFSSEELKKATDNFSVKRVLGKGSQGTVYKGMMVDGKIIAVKRSKVVDEDKLEKFINEIILLSQINHRNIVKLIGCCLETEVPILVYEYIPNGDMFKRLHDESDDYAMTWEVRLRIAIEIAGALTYMHSAASFPIYHRDIKTTNILLDEKYGAKVSDFGTSRSVTIDQTHLTTMVAGTFGYMDPEYFLSSQYTDKSDVYSFGVVLVELITGEKPLSRIRSEEGRGLATHFLEAMKENRVIDIIDIRIKEESKLDQLMAVAKLARKCLSRKGIKRPNMREASLELERIRSSPEDLEAHIENDDEEDQVMEISRE.

The signal sequence occupies residues 1–26 (MKTKTYRFVCLVASVLTLQLMNGSSA). At 27-360 (ATPPPPPNSK…PAKPLVLQGV (334 aa)) the chain is on the extracellular side. 8 N-linked (GlcNAc...) asparagine glycosylation sites follow: N37, N43, N73, N96, N124, N137, N236, and N272. The tract at residues 285 to 342 (CLCEYGYFSEMSYRNCYCSLGFTGNPYLRGGCIDNDDCKGPNICEEGTCVNVPGGYRC) is atypical EGF-like. Intrachain disulfides connect C287–C300, C322–C333, and C328–C342. The chain crosses the membrane as a helical span at residues 361-381 (LLGLMGLLFLVVGTLGLIIFI). Residues 382 to 731 (KKRRRIISSR…EDQVMEISRE (350 aa)) lie on the Cytoplasmic side of the membrane. Residues 432 to 705 (FSVKRVLGKG…REASLELERI (274 aa)) form the Protein kinase domain. ATP is bound by residues 438-446 (LGKGSQGTV) and K460. At Y505 the chain carries Phosphotyrosine. D557 serves as the catalytic Proton acceptor. Residues T591 and T596 each carry the phosphothreonine modification. Y604 carries the phosphotyrosine modification. The interval 709 to 731 (PEDLEAHIENDDEEDQVMEISRE) is disordered.

It belongs to the protein kinase superfamily. Ser/Thr protein kinase family. As to expression, preferentially expressed in roots and flowers.

The protein localises to the membrane. It catalyses the reaction L-seryl-[protein] + ATP = O-phospho-L-seryl-[protein] + ADP + H(+). It carries out the reaction L-threonyl-[protein] + ATP = O-phospho-L-threonyl-[protein] + ADP + H(+). Functionally, serine/threonine-protein kinase that may function as a signaling receptor of extracellular matrix component. May be involved in plant's response to pathogen infection. The protein is Wall-associated receptor kinase-like 5 (WAKL5) of Arabidopsis thaliana (Mouse-ear cress).